Here is an 877-residue protein sequence, read N- to C-terminus: Hopanoid transporter HpnN (877 aa).

The Cytoplasmic segment spans residues 1 to 16 (MVTSLIVRLVAWSVRR). A helical transmembrane segment spans residues 17–37 (PVWVVVLSLLIAAFSGVYVAR). Residues 38–279 (HFKINTDISK…FSSVEDGAAL (242 aa)) are Periplasmic-facing. Residues 280–295 (NGVVTLLVVFVILWLA) form a helical membrane-spanning segment. Residues 296-299 (LRSK) lie on the Cytoplasmic side of the membrane. A helical transmembrane segment spans residues 300-323 (RMIASVLVTLFVGLVVTAALGLAM). The SSD domain occupies 302-428 (IASVLVTLFV…LTLLPALLRL (127 aa)). The Periplasmic portion of the chain corresponds to 324 to 332 (VGSLNMISV). The chain crosses the membrane as a helical span at residues 333–351 (AFMVLFVGLGVDFSIQYGV). Residues 352–373 (KYREERFRDERIDHALIGAAHS) lie on the Cytoplasmic side of the membrane. The chain crosses the membrane as a helical span at residues 374-394 (MGMPLALATTAVAASFFSFIP). At 395-399 (TAYRG) the chain is on the periplasmic side. The helical transmembrane segment at 400 to 426 (VSELGLIAGVGMFVALLTTLTLLPALL) threads the bilayer. Topologically, residues 427 to 452 (RLFAPPGESKTPGFPWLAPVDDYLDR) are cytoplasmic. The helical transmembrane segment at 453 to 472 (HRKPILIGTLAVVIGALPLL) threads the bilayer. The Periplasmic portion of the chain corresponds to 473–718 (AFLHFDFNPL…ILHSANTIIS (246 aa)). Residues 719–739 (AFLHAALWSIISITILLWITL) traverse the membrane as a helical segment. The Cytoplasmic segment spans residues 740–743 (RRFG). Residues 744–766 (DVLRTLVPLLVSGIVTLEMCVVL) traverse the membrane as a helical segment. Topologically, residues 767–774 (GMSLNFAN) are periplasmic. A helical transmembrane segment spans residues 775-794 (IIALPLMLGVGVAFKVYFVM). Residues 795–809 (AWRAGQTGLLHSSLT) lie on the Cytoplasmic side of the membrane. The chain crosses the membrane as a helical span at residues 810 to 827 (HAVLFSAATTATAFGSLW). Topologically, residues 828-836 (LSHHPGTSS) are periplasmic. A helical membrane pass occupies residues 837–858 (MGKLLALALTCTLIGAVVFQPV). Residues 859 to 877 (LMGKPRVKRAKNQSQGINE) lie on the Cytoplasmic side of the membrane.

It belongs to the resistance-nodulation-cell division (RND) (TC 2.A.6) family. MmpL subfamily. In terms of assembly, homodimer.

It is found in the cell inner membrane. Functionally, essential for hopanoid transport from the cytoplasmic to the outer membrane. Is capable of shuttling hopanoid lipids from the inner membrane to the periplasm, where they probably spontaneously insert to the inner leaflet of the outer membrane, strengthening the cell envelope. May be a proton-motive-force (PMF)-dependent transporter. Is critical for multidrug resistance and cell wall remodeling in Burkholderia. In Burkholderia multivorans (strain ATCC 17616 / 249), this protein is Hopanoid transporter HpnN.